A 154-amino-acid polypeptide reads, in one-letter code: Ribonuclease H (154 aa).

The region spanning 1 to 142 (MLKQITLYTD…CDELARNAAL (142 aa)) is the RNase H type-1 domain. Residues Asp10, Glu48, Asp70, and Asp134 each contribute to the Mg(2+) site.

This sequence belongs to the RNase H family. Monomer. Mg(2+) is required as a cofactor.

The protein resides in the cytoplasm. It carries out the reaction Endonucleolytic cleavage to 5'-phosphomonoester.. Endonuclease that specifically degrades the RNA of RNA-DNA hybrids. This chain is Ribonuclease H, found in Tolumonas auensis (strain DSM 9187 / NBRC 110442 / TA 4).